Here is a 332-residue protein sequence, read N- to C-terminus: L-lactate dehydrogenase A chain (332 aa).

A2 is subject to N-acetylalanine. Residue K5 is modified to N6-acetyllysine; alternate. An N6-succinyllysine; alternate modification is found at K5. N6-acetyllysine is present on K14. 29–57 (GAVGMACAISILMKDLADEVALVDVMEDK) serves as a coordination point for NAD(+). At K57 the chain carries N6-acetyllysine; alternate. A Glycyl lysine isopeptide (Lys-Gly) (interchain with G-Cter in SUMO2); alternate cross-link involves residue K57. K81 is subject to N6-acetyllysine. Substrate is bound at residue R106. An N6-acetyllysine; alternate modification is found at K118. N6-succinyllysine; alternate is present on K118. N6-acetyllysine is present on K126. N138 serves as a coordination point for NAD(+). Residues N138 and R169 each coordinate substrate. H193 functions as the Proton acceptor in the catalytic mechanism. N6-acetyllysine is present on residues K224 and K232. The residue at position 239 (Y239) is a Phosphotyrosine. An N6-acetyllysine modification is found at K243. T248 is a substrate binding site. T309 carries the phosphothreonine modification. K318 is modified (N6-acetyllysine; alternate). An N6-succinyllysine; alternate modification is found at K318. The residue at position 322 (T322) is a Phosphothreonine.

It belongs to the LDH/MDH superfamily. LDH family. As to quaternary structure, homotetramer. Interacts with PTEN upstream reading frame protein MP31. Post-translationally, ISGylated.

It is found in the cytoplasm. The enzyme catalyses (S)-lactate + NAD(+) = pyruvate + NADH + H(+). It functions in the pathway fermentation; pyruvate fermentation to lactate; (S)-lactate from pyruvate: step 1/1. In terms of biological role, interconverts simultaneously and stereospecifically pyruvate and lactate with concomitant interconversion of NADH and NAD(+). This chain is L-lactate dehydrogenase A chain (LDHA), found in Bos taurus (Bovine).